The chain runs to 463 residues: Cytidylate cyclase (463 aa).

The Guanylate cyclase domain occupies V122 to G231. F125 provides a ligand contact to a ribonucleoside 5'-triphosphate. Mn(2+) is bound by residues D127, I128, and D171. Residues K334–R454 form an AGS-C domain region.

It belongs to the adenylyl cyclase class-4/guanylyl cyclase family. Pyrimidine cyclase subfamily. Homodimer. The cofactor is Mn(2+).

It is found in the cytoplasm. The catalysed reaction is CTP = 3',5'-cyclic CMP + diphosphate. Functionally, pycsar (pyrimidine cyclase system for antiphage resistance) provides immunity against bacteriophage. The pyrimidine cyclase (PycC) synthesizes cyclic nucleotides in response to infection; these serve as specific second messenger signals. The signal activates the adjacent effector, leading to bacterial cell death and abortive phage infection. A clade E Pycsar system. In terms of biological role, the pyrimidine cyclase gene of a two-gene Pycsar system, generates cyclic CMP (cCMP) from CTP in response to bacteriophage infection. Has little to no activity on ATP, GTP or UTP. Expression of this and adjacent effector Ec303145PycTM (AC P0DV27) confers resistance to bacteriophage P1, T5, lambda-vir and phi27. In Escherichia coli, this protein is Cytidylate cyclase.